Here is a 272-residue protein sequence, read N- to C-terminus: METYAVFGNPIAHSKSPFIHQQFAQQLNIEHPYGRVLAPINDFINTLNTFFSAGGKGANVTVPFKEEAFARADELTERAALAGAVNTLKRLEDGRLLGDNTDGIGLLSDLERLSFIRPGLRILLIGAGGASRGVLLPLLSLDCAVTITNRTVSRAEELAKLFAHTGSIHALGMDELEGHEFDLIINATSSGISGDIPAIPPSLIHPGIYCYDMFYQKGKTPFLAWCEQRGSKRTADGLGMLVAQAAHAFLLWHGVLPDVEPVIKLLQQELSA.

Residues 14–16 (SKS) and T61 contribute to the shikimate site. The active-site Proton acceptor is K65. Residue E77 participates in NADP(+) binding. 2 residues coordinate shikimate: N86 and D102. NADP(+) is bound by residues 126 to 130 (GAGGA), 149 to 154 (NRTVSR), and M213. Y215 is a binding site for shikimate. Residue G237 participates in NADP(+) binding.

Belongs to the shikimate dehydrogenase family. In terms of assembly, homodimer.

It carries out the reaction shikimate + NADP(+) = 3-dehydroshikimate + NADPH + H(+). It functions in the pathway metabolic intermediate biosynthesis; chorismate biosynthesis; chorismate from D-erythrose 4-phosphate and phosphoenolpyruvate: step 4/7. Functionally, involved in the biosynthesis of the chorismate, which leads to the biosynthesis of aromatic amino acids. Catalyzes the reversible NADPH linked reduction of 3-dehydroshikimate (DHSA) to yield shikimate (SA). The protein is Shikimate dehydrogenase (NADP(+)) of Escherichia coli O6:H1 (strain CFT073 / ATCC 700928 / UPEC).